Consider the following 269-residue polypeptide: Putative esterase/lipase 1 (269 aa).

Residue His27 is part of the active site. Residue Ser94 is the Charge relay system of the active site.

Belongs to the lipase/esterase LIP3/BchO family.

The chain is Putative esterase/lipase 1 from Mycoplasma pneumoniae (strain ATCC 29342 / M129 / Subtype 1) (Mycoplasmoides pneumoniae).